A 294-amino-acid chain; its full sequence is RNA polymerase sigma-K factor (294 aa).

The propeptide occupies 1–20 (MVTGVFAALGFVVKELVFLV). The interval 1–156 (MVTGVFAALG…VNNCFFIFKS (156 aa)) is encoded by spoIVCB. The short motif at 79–92 (DLISIGTIGLIKGI) is the Polymerase core binding element. The not present in recombined mature factor stretch occupies residues 114-165 (EIVITKGGCIHPSLIRFNIYGVRIHNGNFFHDKVNNCFFIFKSMPPLFVMNN). The segment at 157–294 (MPPLFVMNNE…KEKRKKAKGK (138 aa)) is encoded by spoIIIC. The segment at residues 251 to 270 (QREIAKELGISRSYVSRIEK) is a DNA-binding region (H-T-H motif).

Belongs to the sigma-70 factor family.

Sigma factors are initiation factors that promote the attachment of RNA polymerase to specific initiation sites and are then released. This sigma factor is responsible for the expression of sporulation specific genes in the mother cell. This Bacillus subtilis (strain 168) protein is RNA polymerase sigma-K factor (sigK).